Consider the following 161-residue polypeptide: E3 ubiquitin ligase complex SCF subunit sconC (161 aa).

The interval Ile-103–Glu-161 is interaction with the F-box domain of F-box proteins.

The protein belongs to the SKP1 family. Component of the SCF (SKP1-CUL1-F-box protein) E3 ubiquitin ligase complexes.

It participates in protein modification; protein ubiquitination. Essential component of the SCF (SKP1-CUL1-F-box protein) E3 ubiquitin ligase complexes, which mediate the ubiquitination and subsequent proteasomal degradation of target proteins. Controls sulfur metabolite repression, probably by mediating the inactivation or degradation of the metR transcription factor. The polypeptide is E3 ubiquitin ligase complex SCF subunit sconC (sconC) (Aspergillus terreus (strain NIH 2624 / FGSC A1156)).